Reading from the N-terminus, the 396-residue chain is MALRITPVTLQSERYRSFSFPKKANLRSPKFAMASTLGSSTPKVDNAKKPFQPPREVHVQVTHSMPPQKIEIFKSIEGWAEQNILVHLKPVEKCWQAQDFLPDPASEGFDEQVKELRARAKEIPDDYFVVLVGDMITEEALPTYQTMLNTLDGVRDETGASLTPWAVWTRAWTAEENRHGDLLHTYLYLSGRVDMRQIQKTIQYLIGSGMDPRTENSPYLGFIYTSFQERATFVSHGNTARHAKDHGDVKLAQICGTIASDEKRHETAYTKIVEKLFEIDPDGTVLAFADMMRKKISMPAHLMYDGRDDNLFEHFSAVAQRLGVYTAKDYADILEFLVGRWKVADLTGLSGEGRKAQDYVCGLPPRIRRLEERAQGRAKEGPVVPFSWIFDRQVKL.

Residues Met1–Met33 constitute a chloroplast transit peptide. Ala34 carries the post-translational modification Blocked amino end (Ala); partial. Positions 138, 176, 179, 229, 262, and 265 each coordinate Fe cation.

Belongs to the fatty acid desaturase type 2 family. As to quaternary structure, homodimer. The cofactor is Fe(2+). In terms of processing, most of the N-terminus is blocked.

The protein resides in the plastid. It localises to the chloroplast. It carries out the reaction octadecanoyl-[ACP] + 2 reduced [2Fe-2S]-[ferredoxin] + O2 + 2 H(+) = (9Z)-octadecenoyl-[ACP] + 2 oxidized [2Fe-2S]-[ferredoxin] + 2 H2O. The protein operates within lipid metabolism; fatty acid metabolism. Its function is as follows. Converts stearoyl-ACP to oleoyl-ACP by introduction of a cis double bond between carbons 9 and 10 of the acyl chain. The sequence is that of Stearoyl-[acyl-carrier-protein] 9-desaturase, chloroplastic from Carthamus tinctorius (Safflower).